A 359-amino-acid polypeptide reads, in one-letter code: MSSLYKPFCVSEGPCKDAILRRGCAPLQHPAAPTRIPSPGGGSTRTFTPIPNIYPGQRTLAAAAIGGRKITHPWKAIFAGGIAGGIEICITFPTEYVKTQLQLDERANPPRYRGIGDCVKLTVQYHGLRGLYRGLSSLLYGSIPKSAVRFGTFEVLSNPMRDATGRLDNKASLLCGLGAGIAEAVLVVCPMETVKVKFIHDQCSLRPRYRGFFHGVREIIRDQGVRGTYQGLTATLLKQGSNQAIRFYVMNLLRNWYKGDDPARDMHPLVTAMFGATAGAASVFGNTPLDVVKTRMQGLEAHRYKSTMDCAFQILKNEGPLAFYKGTVPRLGRVCLDVAIVFVLYEEVVKLLNNVWRTD.

Solcar repeat units lie at residues 71–159 (THPW…LSNP), 170–256 (KASL…LRNW), and 266–351 (MHPL…VVKL). 4 helical membrane-spanning segments follow: residues 77-97 (IFAG…TEYV), 171-191 (ASLL…VCPM), 269-289 (LVTA…NTPL), and 336-356 (LDVA…NNVW).

The protein belongs to the mitochondrial carrier (TC 2.A.29) family. Post-translationally, possesses a short cleavable presequence, which, however, is found to be dispensable both for targeting to mitochondria and insertion into the inner membrane. However, the presequence is required to keep SLC25A1 in a soluble state and thus in an import-competent state. Mature SLC25A1 lacking the presequence is prone to aggregation.

Its subcellular location is the mitochondrion inner membrane. The enzyme catalyses (S)-malate(in) + citrate(out) = (S)-malate(out) + citrate(in). The catalysed reaction is D-threo-isocitrate(in) + citrate(out) = D-threo-isocitrate(out) + citrate(in). It catalyses the reaction citrate(out) + succinate(in) = citrate(in) + succinate(out). It carries out the reaction cis-aconitate(in) + citrate(out) = cis-aconitate(out) + citrate(in). The enzyme catalyses trans-aconitate(in) + citrate(out) = trans-aconitate(out) + citrate(in). The catalysed reaction is phosphoenolpyruvate(in) + citrate(out) = phosphoenolpyruvate(out) + citrate(in). It catalyses the reaction maleate(in) + citrate(out) = maleate(out) + citrate(in). Its function is as follows. Mitochondrial electroneutral antiporter that exports citrate from the mitochondria into the cytosol in exchange for malate. Also able to mediate the exchange of citrate for isocitrate, phosphoenolpyruvate, cis-aconitate and to a lesser extent trans-aconitate, maleate and succinate. In the cytoplasm, citrate plays important roles in fatty acid and sterol synthesis, regulation of glycolysis, protein acetylation, and other physiopathological processes. The sequence is that of Tricarboxylate transport protein A, mitochondrial from Danio rerio (Zebrafish).